The following is a 165-amino-acid chain: UPF0303 protein BamMC406_1480 (165 aa).

It belongs to the UPF0303 family.

This Burkholderia ambifaria (strain MC40-6) protein is UPF0303 protein BamMC406_1480.